Reading from the N-terminus, the 183-residue chain is ATP synthase subunit b, chloroplastic (183 aa).

Residues 25-45 (DILATNLINLTVVVGVLIFFG) form a helical membrane-spanning segment.

This sequence belongs to the ATPase B chain family. F-type ATPases have 2 components, F(1) - the catalytic core - and F(0) - the membrane proton channel. F(1) has five subunits: alpha(3), beta(3), gamma(1), delta(1), epsilon(1). F(0) has four main subunits: a(1), b(1), b'(1) and c(10-14). The alpha and beta chains form an alternating ring which encloses part of the gamma chain. F(1) is attached to F(0) by a central stalk formed by the gamma and epsilon chains, while a peripheral stalk is formed by the delta, b and b' chains.

Its subcellular location is the plastid. The protein localises to the chloroplast thylakoid membrane. Its function is as follows. F(1)F(0) ATP synthase produces ATP from ADP in the presence of a proton or sodium gradient. F-type ATPases consist of two structural domains, F(1) containing the extramembraneous catalytic core and F(0) containing the membrane proton channel, linked together by a central stalk and a peripheral stalk. During catalysis, ATP synthesis in the catalytic domain of F(1) is coupled via a rotary mechanism of the central stalk subunits to proton translocation. In terms of biological role, component of the F(0) channel, it forms part of the peripheral stalk, linking F(1) to F(0). The protein is ATP synthase subunit b, chloroplastic of Saccharum hybrid (Sugarcane).